The sequence spans 238 residues: Small ribosomal subunit protein uS2 (238 aa).

This sequence belongs to the universal ribosomal protein uS2 family.

In Chloroflexus aggregans (strain MD-66 / DSM 9485), this protein is Small ribosomal subunit protein uS2.